Here is a 228-residue protein sequence, read N- to C-terminus: MGRKLLAEFFGTFWLVFGGCGSAVFAAAFPELGIGFTGVALAFGLTVLTMAYAVGGISGGHFNPAVSVGLTVAGRFPASSLVPYVIAQVAGAIVAAAALYVIATGKAGIDLGGFASNGYGEHSPGGYSLVSALLIEIILTAFFLIVILGSTHGRVPAGFAPIAIGLALTLIHLISIPVTNTSVNPARSTGQALFVGGWALQQLWLFWLAPIVGGAAGAVIWKLFGEKD.

Transmembrane regions (helical) follow at residues 9–29 (FFGT…AAAF) and 34–54 (IGFT…AYAV). The short motif at 63–65 (NPA) is the NPA 1 element. Transmembrane regions (helical) follow at residues 82-102 (VPYV…LYVI), 129-149 (LVSA…VILG), and 158-178 (GFAP…SIPV). An NPA 2 motif is present at residues 184–186 (NPA). The chain crosses the membrane as a helical span at residues 204-224 (WLFWLAPIVGGAAGAVIWKLF).

It belongs to the MIP/aquaporin (TC 1.A.8) family. As to quaternary structure, homotetramer.

The protein localises to the cell inner membrane. The enzyme catalyses H2O(in) = H2O(out). Functionally, channel that permits osmotically driven movement of water in both directions. It is involved in the osmoregulation and in the maintenance of cell turgor during volume expansion in rapidly growing cells. It mediates rapid entry or exit of water in response to abrupt changes in osmolarity. This chain is Aquaporin Z 2, found in Agrobacterium fabrum (strain C58 / ATCC 33970) (Agrobacterium tumefaciens (strain C58)).